A 732-amino-acid chain; its full sequence is Catalase-peroxidase (732 aa).

The tract at residues 1–29 (MTTESKCPFSGGGKPNTPRRGPSNQDWWP) is disordered. The segment at residues 96-223 (WHSAGTYRIG…LAAVQMGLIY (128 aa)) is a cross-link (tryptophyl-tyrosyl-methioninium (Trp-Tyr) (with M-249)). The Proton acceptor role is filled by His-97. A cross-link (tryptophyl-tyrosyl-methioninium (Tyr-Met) (with W-96)) is located at residues 223 to 249 (YVNPEGPDGNPDPVAAARDIRETFARM). Residue His-264 participates in heme b binding.

This sequence belongs to the peroxidase family. Peroxidase/catalase subfamily. In terms of assembly, homodimer or homotetramer. Requires heme b as cofactor. Post-translationally, formation of the three residue Trp-Tyr-Met cross-link is important for the catalase, but not the peroxidase activity of the enzyme.

It catalyses the reaction H2O2 + AH2 = A + 2 H2O. The catalysed reaction is 2 H2O2 = O2 + 2 H2O. Bifunctional enzyme with both catalase and broad-spectrum peroxidase activity. In Serratia proteamaculans (strain 568), this protein is Catalase-peroxidase.